Here is a 296-residue protein sequence, read N- to C-terminus: 4-hydroxybenzoate octaprenyltransferase (296 aa).

8 consecutive transmembrane segments (helical) span residues 28-48, 51-71, 102-122, 143-163, 174-194, 212-232, 233-253, and 274-294; these read IGTL…SDGI, LAVL…GCVI, LLLT…LNHL, FFPI…PMAF, AWIL…VYAM, FGRY…LLMA, VLGA…IVLL, and FLAN…HTFF.

The protein belongs to the UbiA prenyltransferase family. Mg(2+) serves as cofactor.

It localises to the cell inner membrane. It catalyses the reaction all-trans-octaprenyl diphosphate + 4-hydroxybenzoate = 4-hydroxy-3-(all-trans-octaprenyl)benzoate + diphosphate. It participates in cofactor biosynthesis; ubiquinone biosynthesis. Functionally, catalyzes the prenylation of para-hydroxybenzoate (PHB) with an all-trans polyprenyl group. Mediates the second step in the final reaction sequence of ubiquinone-8 (UQ-8) biosynthesis, which is the condensation of the polyisoprenoid side chain with PHB, generating the first membrane-bound Q intermediate 3-octaprenyl-4-hydroxybenzoate. This Neisseria gonorrhoeae (strain ATCC 700825 / FA 1090) protein is 4-hydroxybenzoate octaprenyltransferase.